The primary structure comprises 192 residues: Potassium-transporting ATPase KdpC subunit (192 aa).

Residues 14 to 34 (LTGVLVVLCGLIYPAMVTGIA) traverse the membrane as a helical segment.

The protein belongs to the KdpC family. As to quaternary structure, the system is composed of three essential subunits: KdpA, KdpB and KdpC.

Its subcellular location is the cell membrane. Functionally, part of the high-affinity ATP-driven potassium transport (or Kdp) system, which catalyzes the hydrolysis of ATP coupled with the electrogenic transport of potassium into the cytoplasm. This subunit acts as a catalytic chaperone that increases the ATP-binding affinity of the ATP-hydrolyzing subunit KdpB by the formation of a transient KdpB/KdpC/ATP ternary complex. The protein is Potassium-transporting ATPase KdpC subunit of Bacillus cytotoxicus (strain DSM 22905 / CIP 110041 / 391-98 / NVH 391-98).